A 441-amino-acid chain; its full sequence is Arginine biosynthesis bifunctional protein ArgJ, mitochondrial (441 aa).

6 residues coordinate substrate: threonine 177, lysine 204, threonine 215, glutamate 301, asparagine 436, and serine 441. Threonine 215 serves as the catalytic Nucleophile.

The protein belongs to the ArgJ family. In terms of assembly, heterodimer of an alpha and a beta chain. In terms of processing, the alpha and beta chains are autoproteolytically processed from a single precursor protein within the mitochondrion.

Its subcellular location is the mitochondrion matrix. The catalysed reaction is N(2)-acetyl-L-ornithine + L-glutamate = N-acetyl-L-glutamate + L-ornithine. It carries out the reaction L-glutamate + acetyl-CoA = N-acetyl-L-glutamate + CoA + H(+). It functions in the pathway amino-acid biosynthesis; L-arginine biosynthesis; L-ornithine and N-acetyl-L-glutamate from L-glutamate and N(2)-acetyl-L-ornithine (cyclic): step 1/1. The protein operates within amino-acid biosynthesis; L-arginine biosynthesis; N(2)-acetyl-L-ornithine from L-glutamate: step 1/4. Functionally, catalyzes two activities which are involved in the cyclic version of arginine biosynthesis: the synthesis of acetylglutamate from glutamate and acetyl-CoA, and of ornithine by transacetylation between acetylornithine and glutamate. The polypeptide is Arginine biosynthesis bifunctional protein ArgJ, mitochondrial (Candida glabrata (strain ATCC 2001 / BCRC 20586 / JCM 3761 / NBRC 0622 / NRRL Y-65 / CBS 138) (Yeast)).